The sequence spans 343 residues: Ribosomal RNA small subunit methyltransferase C (343 aa).

This sequence belongs to the methyltransferase superfamily. RsmC family. Monomer.

It is found in the cytoplasm. The enzyme catalyses guanosine(1207) in 16S rRNA + S-adenosyl-L-methionine = N(2)-methylguanosine(1207) in 16S rRNA + S-adenosyl-L-homocysteine + H(+). In terms of biological role, specifically methylates the guanine in position 1207 of 16S rRNA in the 30S particle. This is Ribosomal RNA small subunit methyltransferase C from Escherichia coli O1:K1 / APEC.